Reading from the N-terminus, the 84-residue chain is UPF0153 protein YeiW (84 aa).

Belongs to the UPF0153 family.

This Escherichia coli (strain K12) protein is UPF0153 protein YeiW (yeiW).